A 150-amino-acid chain; its full sequence is UPF0208 membrane protein VS_0999 (150 aa).

A run of 2 helical transmembrane segments spans residues 42 to 62 (FGVK…MVFN) and 70 to 90 (AVVM…WLGN).

This sequence belongs to the UPF0208 family.

It localises to the cell inner membrane. The protein is UPF0208 membrane protein VS_0999 of Vibrio atlanticus (strain LGP32) (Vibrio splendidus (strain Mel32)).